The primary structure comprises 481 residues: UDP-N-acetylmuramoyl-L-alanyl-D-glutamate--L-lysine ligase (481 aa).

A UDP-N-acetyl-alpha-D-muramoyl-L-alanyl-D-glutamate-binding site is contributed by Ser-42. 118–124 lines the ATP pocket; sequence GTKGKTT. UDP-N-acetyl-alpha-D-muramoyl-L-alanyl-D-glutamate-binding positions include Asn-158, 160 to 161, Ser-187, and Arg-195; that span reads TT. Lys-229 is modified (N6-carboxylysine). An L-lysine recognition motif motif is present at residues 404–407; it reads DDPN.

The protein belongs to the MurCDEF family. MurE subfamily. In terms of processing, carboxylation is probably crucial for Mg(2+) binding and, consequently, for the gamma-phosphate positioning of ATP.

It localises to the cytoplasm. It carries out the reaction UDP-N-acetyl-alpha-D-muramoyl-L-alanyl-D-glutamate + L-lysine + ATP = UDP-N-acetyl-alpha-D-muramoyl-L-alanyl-gamma-D-glutamyl-L-lysine + ADP + phosphate + H(+). The protein operates within cell wall biogenesis; peptidoglycan biosynthesis. In terms of biological role, catalyzes the addition of L-lysine to the nucleotide precursor UDP-N-acetylmuramoyl-L-alanyl-D-glutamate (UMAG) in the biosynthesis of bacterial cell-wall peptidoglycan. This Streptococcus thermophilus (strain ATCC BAA-491 / LMD-9) protein is UDP-N-acetylmuramoyl-L-alanyl-D-glutamate--L-lysine ligase.